The primary structure comprises 483 residues: Keratin, type II cytoskeletal 8 (483 aa).

A compositionally biased stretch (polar residues) spans M1–F25. A disordered region spans residues M1–S43. The head stretch occupies residues M1–Q90. A Phosphoserine; by PKC/PRKCE modification is found at S9. K11 is covalently cross-linked (Glycyl lysine isopeptide (Lys-Gly) (interchain with G-Cter in SUMO2)). Phosphoserine occurs at positions 13, 15, 21, and 22. Residue R23 is modified to Omega-N-methylarginine. S24 is subject to Phosphoserine; by PKC/PRKCE. S24 carries the phosphoserine modification. T26 bears the Phosphothreonine mark. Low complexity predominate over residues T26–S43. S27 carries the post-translational modification Phosphoserine. R32 carries the post-translational modification Omega-N-methylarginine. A phosphoserine mark is found at S34, S37, and S39. R40 bears the Omega-N-methylarginine mark. Phosphoserine occurs at positions 43, 44, and 47. R49 is subject to Asymmetric dimethylarginine; alternate. Position 49 is an omega-N-methylarginine; alternate (R49). The residue at position 51 (S51) is a Phosphoserine. Residues E91–L126 form a coil 1A region. The IF rod domain occupies E91 to L402. K101 carries the post-translational modification N6-malonyllysine. Glycyl lysine isopeptide (Lys-Gly) (interchain with G-Cter in SUMO2) cross-links involve residues K122 and K130. The tract at residues Q127 to Y143 is linker 1. Residues I144–L235 form a coil 1B region. K197 is covalently cross-linked (Glycyl lysine isopeptide (Lys-Gly) (interchain with G-Cter in SUMO1); alternate). K197 participates in a covalent cross-link: Glycyl lysine isopeptide (Lys-Gly) (interchain with G-Cter in SUMO2); alternate. N6-acetyllysine is present on K207. A linker 12 region spans residues Q236–I259. A phosphoserine mark is found at S253, S258, and S274. The interval I260–E398 is coil 2. Residues A261–L382 form a necessary for interaction with PNN region. K285 is covalently cross-linked (Glycyl lysine isopeptide (Lys-Gly) (interchain with G-Cter in SUMO2)). A Glycyl lysine isopeptide (Lys-Gly) (interchain with G-Cter in SUMO2); alternate cross-link involves residue K295. K295 carries the N6-acetyllysine; alternate modification. A Glycyl lysine isopeptide (Lys-Gly) (interchain with G-Cter in SUMO2) cross-link involves residue K304. K325 is covalently cross-linked (Glycyl lysine isopeptide (Lys-Gly) (interchain with G-Cter in SUMO2); alternate). Residue K325 is modified to N6-acetyllysine; alternate. Residue K393 forms a Glycyl lysine isopeptide (Lys-Gly) (interchain with G-Cter in SUMO2) linkage. Positions E399 to K483 are tail. S400, S404, S410, S417, S424, S426, and S432 each carry phosphoserine. K472 participates in a covalent cross-link: Glycyl lysine isopeptide (Lys-Gly) (interchain with G-Cter in SUMO1); alternate. Residue K472 forms a Glycyl lysine isopeptide (Lys-Gly) (interchain with G-Cter in SUMO2); alternate linkage. 4 positions are modified to phosphoserine: S475, S477, S478, and S482.

The protein belongs to the intermediate filament family. Heterotetramer of two type I and two type II keratins. Forms a heterodimer with KRT18. Associates with KRT20. Interacts with PNN. When associated with KRT19, interacts with DMD. Interacts with TCHP. Interacts with APEX1. Interacts with GPER1. Interacts with EPPK1. Interacts with PKP1 and PKP2. O-glycosylated. O-GlcNAcylation at multiple sites increases solubility, and decreases stability by inducing proteasomal degradation. Post-translationally, O-glycosylated (O-GlcNAcylated), in a cell cycle-dependent manner. Expressed in cardiac and striated muscle. Expressed at Z-lines within the muscle fibers and at Z-line and M-line domains at costameres at the sarcolemmal membrane (at protein level). Observed in coagulating gland, bladder, salivary gland, kidney, spleen, thymus, lung and heart. Also observed in ventral prostate, seminal vesicle and liver where expression increases following castration.

It is found in the cytoplasm. The protein resides in the nucleus. Its subcellular location is the nucleoplasm. It localises to the nucleus matrix. Together with KRT19, helps to link the contractile apparatus to dystrophin at the costameres of striated muscle. The polypeptide is Keratin, type II cytoskeletal 8 (Krt8) (Rattus norvegicus (Rat)).